Reading from the N-terminus, the 601-residue chain is Proteasome-associated ATPase (601 aa).

Gly residues predominate over residues 1–15; the sequence is MSGPRSGSGSGGSTG. Residues 1–29 are disordered; it reads MSGPRSGSGSGGSTGRPGDADSQRSAYEK. The segment covering 18–29 has biased composition (basic and acidic residues); that stretch reads GDADSQRSAYEK. A coiled-coil region spans residues 19-106; that stretch reads DADSQRSAYE…LKEEVDRLAQ (88 aa). Residue 289–294 participates in ATP binding; sequence GCGKTL. Residues 600-601 are docks into pockets in the proteasome alpha-ring; it reads YL.

This sequence belongs to the AAA ATPase family. In terms of assembly, homohexamer. Assembles into a hexameric ring structure that caps the 20S proteasome core. Strongly interacts with the prokaryotic ubiquitin-like protein Pup through a hydrophobic interface; the interacting region of ARC lies in its N-terminal coiled-coil domain. There is one Pup binding site per ARC hexamer ring. Upon ATP-binding, the C-terminus of ARC interacts with the alpha-rings of the proteasome core, possibly by binding to the intersubunit pockets.

The protein operates within protein degradation; proteasomal Pup-dependent pathway. Its function is as follows. ATPase which is responsible for recognizing, binding, unfolding and translocation of pupylated proteins into the bacterial 20S proteasome core particle. May be essential for opening the gate of the 20S proteasome via an interaction with its C-terminus, thereby allowing substrate entry and access to the site of proteolysis. Thus, the C-termini of the proteasomal ATPase may function like a 'key in a lock' to induce gate opening and therefore regulate proteolysis. The sequence is that of Proteasome-associated ATPase from Parafrankia sp. (strain EAN1pec).